Here is a 237-residue protein sequence, read N- to C-terminus: 1-(5-phosphoribosyl)-5-[(5-phosphoribosylamino)methylideneamino] imidazole-4-carboxamide isomerase (237 aa).

Asp8 serves as the catalytic Proton acceptor. The Proton donor role is filled by Asp130.

The protein belongs to the HisA/HisF family.

It localises to the cytoplasm. It catalyses the reaction 1-(5-phospho-beta-D-ribosyl)-5-[(5-phospho-beta-D-ribosylamino)methylideneamino]imidazole-4-carboxamide = 5-[(5-phospho-1-deoxy-D-ribulos-1-ylimino)methylamino]-1-(5-phospho-beta-D-ribosyl)imidazole-4-carboxamide. Its pathway is amino-acid biosynthesis; L-histidine biosynthesis; L-histidine from 5-phospho-alpha-D-ribose 1-diphosphate: step 4/9. The chain is 1-(5-phosphoribosyl)-5-[(5-phosphoribosylamino)methylideneamino] imidazole-4-carboxamide isomerase from Caldicellulosiruptor saccharolyticus (strain ATCC 43494 / DSM 8903 / Tp8T 6331).